A 449-amino-acid chain; its full sequence is Chromosomal replication initiator protein DnaA (449 aa).

A domain I, interacts with DnaA modulators region spans residues 1–73; the sequence is MDADLKNLWD…ANSIKAVCSK (73 aa). Residues 73-110 form a domain II region; it reads KLYTIEFIIMSEIYEKEEIKSSSNQKSKAIVVNDEMSS. The tract at residues 111–327 is domain III, AAA+ region; sequence TLNPKYTFNS…GALIRIIAYS (217 aa). 4 residues coordinate ATP: Gly155, Gly157, Lys158, and Thr159. Residues 328 to 449 form a domain IV, binds dsDNA region; sequence SLTNREVTVD…NDITKKLTQN (122 aa).

It belongs to the DnaA family. Oligomerizes as a right-handed, spiral filament on DNA at oriC.

The protein localises to the cytoplasm. Plays an essential role in the initiation and regulation of chromosomal replication. ATP-DnaA binds to the origin of replication (oriC) to initiate formation of the DNA replication initiation complex once per cell cycle. Binds the DnaA box (a 9 base pair repeat at the origin) and separates the double-stranded (ds)DNA. Forms a right-handed helical filament on oriC DNA; dsDNA binds to the exterior of the filament while single-stranded (ss)DNA is stabiized in the filament's interior. The ATP-DnaA-oriC complex binds and stabilizes one strand of the AT-rich DNA unwinding element (DUE), permitting loading of DNA polymerase. After initiation quickly degrades to an ADP-DnaA complex that is not apt for DNA replication. Binds acidic phospholipids. This is Chromosomal replication initiator protein DnaA from Clostridium beijerinckii (strain ATCC 51743 / NCIMB 8052) (Clostridium acetobutylicum).